Reading from the N-terminus, the 183-residue chain is Large ribosomal subunit protein uL5 (183 aa).

It belongs to the universal ribosomal protein uL5 family. Part of the 50S ribosomal subunit; part of the 5S rRNA/L5/L18/L25 subcomplex. Contacts the 5S rRNA and the P site tRNA. Forms a bridge to the 30S subunit in the 70S ribosome.

In terms of biological role, this is one of the proteins that bind and probably mediate the attachment of the 5S RNA into the large ribosomal subunit, where it forms part of the central protuberance. In the 70S ribosome it contacts protein S13 of the 30S subunit (bridge B1b), connecting the 2 subunits; this bridge is implicated in subunit movement. Contacts the P site tRNA; the 5S rRNA and some of its associated proteins might help stabilize positioning of ribosome-bound tRNAs. The sequence is that of Large ribosomal subunit protein uL5 from Flavobacterium johnsoniae (strain ATCC 17061 / DSM 2064 / JCM 8514 / BCRC 14874 / CCUG 350202 / NBRC 14942 / NCIMB 11054 / UW101) (Cytophaga johnsonae).